Reading from the N-terminus, the 375-residue chain is Neuropeptide Y receptor type 4 (375 aa).

The Extracellular segment spans residues methionine 1 to aspartate 39. N-linked (GlcNAc...) asparagine glycans are attached at residues asparagine 2, asparagine 19, and asparagine 29. A helical membrane pass occupies residues leucine 40 to leucine 60. Residues cysteine 61–leucine 78 lie on the Cytoplasmic side of the membrane. A helical transmembrane segment spans residues leucine 79–valine 99. At threonine 100 to methionine 116 the chain is on the extracellular side. Cysteine 114 and cysteine 201 are oxidised to a cystine. A helical transmembrane segment spans residues leucine 117–leucine 137. The Cytoplasmic portion of the chain corresponds to glutamate 138–glutamine 155. The helical transmembrane segment at alanine 156–alanine 176 threads the bilayer. The Extracellular portion of the chain corresponds to asparagine 177–arginine 211. An N-linked (GlcNAc...) asparagine glycan is attached at asparagine 187. A helical membrane pass occupies residues leucine 212–valine 232. Residues cysteine 233 to arginine 262 lie on the Cytoplasmic side of the membrane. Residues isoleucine 263–valine 283 traverse the membrane as a helical segment. Topologically, residues phenylalanine 284–asparagine 301 are extracellular. The helical transmembrane segment at leucine 302–tyrosine 322 threads the bilayer. Over glycine 323–methionine 375 the chain is Cytoplasmic. A lipid anchor (S-palmitoyl cysteine) is attached at cysteine 340.

It belongs to the G-protein coupled receptor 1 family. In terms of tissue distribution, detected in colon and brain.

It localises to the cell membrane. In terms of biological role, g protein-coupled receptor for PPY/pancreatic polypeptide/PP that is negatively coupled to cAMP. Has much lower affinity for the NPY/neuropeptide Y and PYY/peptide YY. The protein is Neuropeptide Y receptor type 4 (Npy4r) of Rattus norvegicus (Rat).